We begin with the raw amino-acid sequence, 468 residues long: Glutamate--tRNA ligase (468 aa).

A 'HIGH' region motif is present at residues 9 to 19 (PSPTGYLHVGG). 4 residues coordinate Zn(2+): Cys98, Cys100, Cys125, and Asp127. The 'KMSKS' region signature appears at 235–239 (KLSKR). Lys238 contacts ATP.

This sequence belongs to the class-I aminoacyl-tRNA synthetase family. Glutamate--tRNA ligase type 1 subfamily. In terms of assembly, monomer. It depends on Zn(2+) as a cofactor.

It is found in the cytoplasm. The catalysed reaction is tRNA(Glu) + L-glutamate + ATP = L-glutamyl-tRNA(Glu) + AMP + diphosphate. Catalyzes the attachment of glutamate to tRNA(Glu) in a two-step reaction: glutamate is first activated by ATP to form Glu-AMP and then transferred to the acceptor end of tRNA(Glu). The protein is Glutamate--tRNA ligase of Idiomarina loihiensis (strain ATCC BAA-735 / DSM 15497 / L2-TR).